The primary structure comprises 313 residues: Ribosomal RNA small subunit methyltransferase H (313 aa).

Residues G34 to H36, D53, F80, D101, and Q108 each bind S-adenosyl-L-methionine.

Belongs to the methyltransferase superfamily. RsmH family.

It is found in the cytoplasm. It catalyses the reaction cytidine(1402) in 16S rRNA + S-adenosyl-L-methionine = N(4)-methylcytidine(1402) in 16S rRNA + S-adenosyl-L-homocysteine + H(+). In terms of biological role, specifically methylates the N4 position of cytidine in position 1402 (C1402) of 16S rRNA. The sequence is that of Ribosomal RNA small subunit methyltransferase H from Lacticaseibacillus paracasei (strain ATCC 334 / BCRC 17002 / CCUG 31169 / CIP 107868 / KCTC 3260 / NRRL B-441) (Lactobacillus paracasei).